We begin with the raw amino-acid sequence, 195 residues long: Large ribosomal subunit protein bL17 (195 aa).

A disordered region spans residues 125–195 (ANRARRVGAS…PTQDSDADKS (71 aa)). A compositionally biased stretch (low complexity) spans 136 to 152 (QTAPVAAAAAPQAAVEP). 2 stretches are compositionally biased toward acidic residues: residues 153 to 173 (EATE…EDTT) and 183 to 195 (TDDP…ADKS).

This sequence belongs to the bacterial ribosomal protein bL17 family. In terms of assembly, part of the 50S ribosomal subunit. Contacts protein L32.

In Mycobacterium sp. (strain JLS), this protein is Large ribosomal subunit protein bL17.